A 278-amino-acid chain; its full sequence is 3-methyl-2-oxobutanoate hydroxymethyltransferase (278 aa).

Asp-43 and Asp-82 together coordinate Mg(2+). 3-methyl-2-oxobutanoate contacts are provided by residues 43–44, Asp-82, and Lys-112; that span reads DS. A Mg(2+)-binding site is contributed by Glu-114. The active-site Proton acceptor is Glu-181.

The protein belongs to the PanB family. Homodecamer; pentamer of dimers. The cofactor is Mg(2+).

Its subcellular location is the cytoplasm. It carries out the reaction 3-methyl-2-oxobutanoate + (6R)-5,10-methylene-5,6,7,8-tetrahydrofolate + H2O = 2-dehydropantoate + (6S)-5,6,7,8-tetrahydrofolate. Its pathway is cofactor biosynthesis; (R)-pantothenate biosynthesis; (R)-pantoate from 3-methyl-2-oxobutanoate: step 1/2. Functionally, catalyzes the reversible reaction in which hydroxymethyl group from 5,10-methylenetetrahydrofolate is transferred onto alpha-ketoisovalerate to form ketopantoate. This Bacillus cereus (strain AH187) protein is 3-methyl-2-oxobutanoate hydroxymethyltransferase.